We begin with the raw amino-acid sequence, 103 residues long: Large ribosomal subunit protein bL21 (103 aa).

It belongs to the bacterial ribosomal protein bL21 family. As to quaternary structure, part of the 50S ribosomal subunit. Contacts protein L20.

Its function is as follows. This protein binds to 23S rRNA in the presence of protein L20. This chain is Large ribosomal subunit protein bL21, found in Pseudoalteromonas atlantica (strain T6c / ATCC BAA-1087).